The chain runs to 324 residues: Glutathione synthetase (324 aa).

The region spanning Lys133–Glu317 is the ATP-grasp domain. Val159–Gly215 contacts ATP. Residues Glu288 and Asn290 each contribute to the Mg(2+) site.

This sequence belongs to the prokaryotic GSH synthase family. Requires Mg(2+) as cofactor. It depends on Mn(2+) as a cofactor.

The catalysed reaction is gamma-L-glutamyl-L-cysteine + glycine + ATP = glutathione + ADP + phosphate + H(+). Its pathway is sulfur metabolism; glutathione biosynthesis; glutathione from L-cysteine and L-glutamate: step 2/2. The sequence is that of Glutathione synthetase from Nostoc sp. (strain PCC 7120 / SAG 25.82 / UTEX 2576).